A 503-amino-acid chain; its full sequence is tRNA-2-methylthio-N(6)-dimethylallyladenosine synthase (503 aa).

The MTTase N-terminal domain occupies 5-121 (RSYEIRTFGC…LPVLLERARH (117 aa)). [4Fe-4S] cluster is bound by residues cysteine 14, cysteine 50, cysteine 84, cysteine 158, cysteine 162, and cysteine 165. Residues 144–380 (RESAYAGWVS…IALQEEISLA (237 aa)) form the Radical SAM core domain. One can recognise a TRAM domain in the interval 383–453 (RELIGTEVEL…PHHLIADAPV (71 aa)).

This sequence belongs to the methylthiotransferase family. MiaB subfamily. Monomer. The cofactor is [4Fe-4S] cluster.

It localises to the cytoplasm. It carries out the reaction N(6)-dimethylallyladenosine(37) in tRNA + (sulfur carrier)-SH + AH2 + 2 S-adenosyl-L-methionine = 2-methylsulfanyl-N(6)-dimethylallyladenosine(37) in tRNA + (sulfur carrier)-H + 5'-deoxyadenosine + L-methionine + A + S-adenosyl-L-homocysteine + 2 H(+). Functionally, catalyzes the methylthiolation of N6-(dimethylallyl)adenosine (i(6)A), leading to the formation of 2-methylthio-N6-(dimethylallyl)adenosine (ms(2)i(6)A) at position 37 in tRNAs that read codons beginning with uridine. The chain is tRNA-2-methylthio-N(6)-dimethylallyladenosine synthase from Nocardia farcinica (strain IFM 10152).